The sequence spans 657 residues: Glycogen debranching enzyme (657 aa).

Asp336 (nucleophile) is an active-site residue. Glu371 (proton donor) is an active-site residue. A compositionally biased stretch (basic and acidic residues) spans 458-467 (NEANGEENRD). Positions 458–479 (NEANGEENRDGTNNNYSNNHGK) are disordered.

Belongs to the glycosyl hydrolase 13 family.

The catalysed reaction is Hydrolysis of (1-&gt;6)-alpha-D-glucosidic linkages to branches with degrees of polymerization of three or four glucose residues in limit dextrin.. It participates in glycan degradation; glycogen degradation. Removes maltotriose and maltotetraose chains that are attached by 1,6-alpha-linkage to the limit dextrin main chain, generating a debranched limit dextrin. The protein is Glycogen debranching enzyme of Escherichia coli O139:H28 (strain E24377A / ETEC).